The primary structure comprises 177 residues: 2-C-methyl-D-erythritol 2,4-cyclodiphosphate synthase (177 aa).

A divalent metal cation-binding residues include aspartate 8 and histidine 10. Residues 8 to 10 (DVH) and 34 to 35 (HS) each bind 4-CDP-2-C-methyl-D-erythritol 2-phosphate. Histidine 42 is a binding site for a divalent metal cation. 4-CDP-2-C-methyl-D-erythritol 2-phosphate-binding positions include 56 to 58 (DIG), 61 to 65 (FPDTD), 132 to 135 (TTEE), phenylalanine 139, and arginine 142.

This sequence belongs to the IspF family. In terms of assembly, homotrimer. The cofactor is a divalent metal cation.

The catalysed reaction is 4-CDP-2-C-methyl-D-erythritol 2-phosphate = 2-C-methyl-D-erythritol 2,4-cyclic diphosphate + CMP. It functions in the pathway isoprenoid biosynthesis; isopentenyl diphosphate biosynthesis via DXP pathway; isopentenyl diphosphate from 1-deoxy-D-xylulose 5-phosphate: step 4/6. Involved in the biosynthesis of isopentenyl diphosphate (IPP) and dimethylallyl diphosphate (DMAPP), two major building blocks of isoprenoid compounds. Catalyzes the conversion of 4-diphosphocytidyl-2-C-methyl-D-erythritol 2-phosphate (CDP-ME2P) to 2-C-methyl-D-erythritol 2,4-cyclodiphosphate (ME-CPP) with a corresponding release of cytidine 5-monophosphate (CMP). This Agathobacter rectalis (strain ATCC 33656 / DSM 3377 / JCM 17463 / KCTC 5835 / VPI 0990) (Eubacterium rectale) protein is 2-C-methyl-D-erythritol 2,4-cyclodiphosphate synthase.